The primary structure comprises 323 residues: Acetyl esterase (323 aa).

The Involved in the stabilization of the negatively charged intermediate by the formation of the oxyanion hole signature appears at 91–93 (HGG). Catalysis depends on residues S165, D262, and H292.

It belongs to the 'GDXG' lipolytic enzyme family. As to quaternary structure, homodimer. Interacts with MalT and MelA.

The protein localises to the cytoplasm. Displays esterase activity towards short chain fatty esters (acyl chain length of up to 8 carbons). Able to hydrolyze triacetylglycerol (triacetin) and tributyrylglycerol (tributyrin), but not trioleylglycerol (triolein) or cholesterol oleate. Negatively regulates MalT activity by antagonizing maltotriose binding. Inhibits MelA galactosidase activity. This is Acetyl esterase from Salmonella agona (strain SL483).